A 226-amino-acid chain; its full sequence is MTWMIRDVPKDSRPRERLLASGPESLSDHELLAILLRTGTKDESVVQLAQRVLQHFEGLRLLKDATVEEMTSIKGIGPTKAVQILAALELGRRIHQSGYNDRYVIRCPEDGAKYVMEDMRFLSQEHFVAIYLNTKNQVIHRKTVFIGSLNASIVHPREVFKEAIKRSAASVICVHNHPSGDPTPSREDIDVTKRLAECGRIIGIELLDHLIIGDQKFISLKEKGYV.

The region spanning valine 104 to valine 226 is the MPN domain. Residues histidine 175, histidine 177, and aspartate 188 each contribute to the Zn(2+) site. Residues histidine 175–aspartate 188 carry the JAMM motif motif.

This sequence belongs to the UPF0758 family.

The protein is UPF0758 protein GTNG_2548 of Geobacillus thermodenitrificans (strain NG80-2).